A 218-amino-acid polypeptide reads, in one-letter code: MANSSPVYDWFQERLEIQDIADDFSTKYVPPHVNIFYCLGGITLVCFLIQFATGFAMTFYYKPTVAEAYSSVQYLMTDVSFGWLIRSVHRWSASMMVLMLILHVFRVYLTGGFKRPRELTWVTGVTMAVITVSFGVTGYSLPWDQVGYWAVKIVSGVPAAIPVVGDFMVELLRGGESVGQSTLTRFYSLHTFVMPWLLAVFMLMHFLMIRKQGISGPL.

A helical membrane pass occupies residues 35-55 (IFYCLGGITLVCFLIQFATGF). A heme c-binding site is contributed by Cys-38. Heme b is bound by residues His-89 and His-103. Helical transmembrane passes span 93 to 113 (ASMM…TGGF), 119 to 139 (LTWV…VTGY), and 189 to 209 (LHTF…FLMI). Residues His-190 and His-205 each contribute to the heme b site.

The protein belongs to the cytochrome b family. PetB subfamily. As to quaternary structure, the 4 large subunits of the cytochrome b6-f complex are cytochrome b6, subunit IV (17 kDa polypeptide, PetD), cytochrome f and the Rieske protein, while the 4 small subunits are PetG, PetL, PetM and PetN. The complex functions as a dimer. The cofactor is heme b. It depends on heme c as a cofactor.

The protein localises to the cellular thylakoid membrane. Component of the cytochrome b6-f complex, which mediates electron transfer between photosystem II (PSII) and photosystem I (PSI), cyclic electron flow around PSI, and state transitions. In Synechococcus sp. (strain CC9311), this protein is Cytochrome b6.